The sequence spans 628 residues: tRNA uridine 5-carboxymethylaminomethyl modification enzyme MnmG 1 (628 aa).

FAD is bound at residue 11 to 16; it reads GAGHAG. 280-294 is an NAD(+) binding site; sequence GPRHCPSIDRKVLNF.

The protein belongs to the MnmG family. In terms of assembly, homodimer. Heterotetramer of two MnmE and two MnmG subunits. It depends on FAD as a cofactor.

It is found in the cytoplasm. NAD-binding protein involved in the addition of a carboxymethylaminomethyl (cmnm) group at the wobble position (U34) of certain tRNAs, forming tRNA-cmnm(5)s(2)U34. The chain is tRNA uridine 5-carboxymethylaminomethyl modification enzyme MnmG 1 from Fusobacterium nucleatum subsp. nucleatum (strain ATCC 25586 / DSM 15643 / BCRC 10681 / CIP 101130 / JCM 8532 / KCTC 2640 / LMG 13131 / VPI 4355).